A 229-amino-acid chain; its full sequence is Zinc finger matrin-type protein 4 (229 aa).

2 Matrin-type zinc fingers span residues 14-44 (SYCK…KVRL) and 72-106 (DKNK…LKLL). Residues 116 to 135 (TATPLSPLKPPRMDTAPVVA) are disordered. 2 Matrin-type zinc fingers span residues 145–175 (RYCG…NAAR) and 198–228 (YRCT…NLKN).

The protein resides in the nucleus. The protein is Zinc finger matrin-type protein 4 (ZMAT4) of Homo sapiens (Human).